The sequence spans 1132 residues: MMTSVSNDRCRGAREKPQMPTAHAAQSQKQVVQATAEQMRLAQVIFDKNDSDFEAKVKQLMEVTGKNQDECIVALHDCNGDVNKAINILLEGNSDTTSWETVGGKKKNFGRESSENKENREKRTEREASRGRGTNNRKGRGGNRVREFKGEENGIDCSQGDKPAERGKRARGRGFGRGRGRGTGRFSAQSMGTFNPADYSESMSTDGCGTKLAVWEAAQNGTDEGPEGLAKSHSMSQEPPSKSSYGLKGAWKNSVEEWTTEDWTEDLSETKVFTASSAPAENHVTPGHSIDLVALLHKPAPPTQATEVNSFETSQQQGFGQALVFTNSQHNNQMAPGTANSTSASSYSPQSLSSVLGSGFGELPQSNMVNISNSQILDKLKPPGLSPFPAASSAQQNDTASPPATTAAWDLKPSAPQPSVLSRLDFKSQPEPSPVLSQLSQRQQHQTQAVSVPPPGLESFSSLAKPRESTAGDGPSTVSRLLQLPNMTVENIVSAHQPQPKHIKLPKRRVPPASKVPVSAVEMPGSSDVTGLNVQFGALEFGSEPSLSEFGSAASASENSNQIPISLYPKSLSEPLNASFPMTSAVQSSTYTTSVVTSSTLTSSALSSTSPVTTSSSYDQSSVHTRIAYQSSASPPDSAPGSVANGHGGGRSQHTVDTTSSVPAPKKTDPSALPSVSTLPGPASCTALLPSSAQHTATLPSLTPAAAELSSSPLSQLSSSLSGHQNSMTSAHATRSTSTPHTHASVESTASSAAFSAAATSAPSAPSSGVVLPGSMSTVSSLCLGGTTVSVPSSSTRATALVTSGKAPPNLPQGVPPLLHNQYLVGPGGLLPAYPIYGYDELQMLQSRLPMDYYGIPFAAPTALASRDGNLANNPYSGDVTKFGRGDSASPAPPTTPAQAQQSQSQTHHTAQQPFLNPGLPPGYSYTGLPYYTGVPSAFQYGPTMFVPPTSAKQHGVALSTPPTPFQQASGYGQHAYSTGYDDLTQGTAAGDYTKGGYGGSSQAPNKSTGSGPGKGVSVSSGTGLPDMTGSVYNKTQTFDKQGFHAGTPPPFSLPSALGSTGPLAPAAAPGYAPAPFLHIMPAHQQPHSQLLHHHLQQDAPSGSGQRSQPSSLQPKSQASKPTYGSAPYWTN.

The tract at residues 1 to 29 is disordered; it reads MMTSVSNDRCRGAREKPQMPTAHAAQSQK. Positions 8 to 17 are enriched in basic and acidic residues; the sequence is DRCRGAREKP. The 45-residue stretch at 48-92 folds into the UBA domain; that stretch reads KNDSDFEAKVKQLMEVTGKNQDECIVALHDCNGDVNKAINILLEG. Disordered stretches follow at residues 95–202, 221–248, 331–351, 380–479, 602–679, 713–749, 875–919, 996–1033, 1040–1059, and 1087–1132; these read DTTS…YSES, GTDEGPEGLAKSHSMSQEPPSKSSYGLK, NNQMAPGTANSTSASSYSPQS, LKPP…STVS, TSSA…VSTL, PLSQLSSSLSGHQNSMTSAHATRSTSTPHTHASVEST, PYSG…LNPG, GGYGGSSQAPNKSTGSGPGKGVSVSSGTGLPDMTGSVY, DKQGFHAGTPPPFSLPSALG, and PHSQ…YWTN. Positions 109-130 are enriched in basic and acidic residues; that stretch reads FGRESSENKENREKRTEREASR. Arg166 carries the omega-N-methylarginine modification. A compositionally biased stretch (basic residues) spans 168–182; it reads KRARGRGFGRGRGRG. Composition is skewed to polar residues over residues 233–244 and 331–340; these read HSMSQEPPSKSS and NNQMAPGTAN. Over residues 341-351 the composition is skewed to low complexity; sequence STSASSYSPQS. Residues 392–404 show a composition bias toward polar residues; it reads SSAQQNDTASPPA. Phosphoserine occurs at positions 433 and 440. 2 stretches are compositionally biased toward low complexity: residues 436–448 and 602–618; these read LSQLSQRQQHQTQ and TSSALSSTSPVTTSSSY. Positions 619–630 are enriched in polar residues; it reads DQSSVHTRIAYQ. Ser631 is modified (phosphoserine). A compositionally biased stretch (low complexity) spans 631–644; that stretch reads SSASPPDSAPGSVA. Over residues 652-662 the composition is skewed to polar residues; that stretch reads SQHTVDTTSSV. Residues 713–722 are compositionally biased toward low complexity; that stretch reads PLSQLSSSLS. Residues 723–742 are compositionally biased toward polar residues; that stretch reads GHQNSMTSAHATRSTSTPHT. Low complexity predominate over residues 897–914; the sequence is PAQAQQSQSQTHHTAQQP. Positions 1101–1115 are enriched in low complexity; the sequence is PSGSGQRSQPSSLQP. A compositionally biased stretch (polar residues) spans 1116-1132; that stretch reads KSQASKPTYGSAPYWTN.

In terms of assembly, may interact with ANXA2.

It is found in the nucleus. Its subcellular location is the chromosome. The protein resides in the cytoplasm. In terms of biological role, recruits the ubiquitination machinery to RNA polymerase II for polyubiquitination, removal and degradation, when the transcription-coupled nucleotide excision repair (TC-NER) machinery fails to resolve DNA damage. May promote the degradation of ANXA2. This chain is Ubiquitin-associated protein 2, found in Mus musculus (Mouse).